The primary structure comprises 546 residues: Phosphoglucomutase (546 aa).

Ser135 acts as the Phosphoserine intermediate in catalysis. The Mg(2+) site is built by Ser135, Asp288, Asp290, and Asp292.

It belongs to the phosphohexose mutase family. Mg(2+) serves as cofactor.

The catalysed reaction is alpha-D-glucose 1-phosphate = alpha-D-glucose 6-phosphate. Its pathway is glycolipid metabolism; diglucosyl-diacylglycerol biosynthesis. Functionally, catalyzes the interconversion between glucose-6-phosphate and alpha-glucose-1-phosphate. This is the first step in the biosynthesis of diglucosyl-diacylglycerol (Glc2-DAG), i.e. a glycolipid found in the membrane, which is also used as a membrane anchor for lipoteichoic acid (LTA). The polypeptide is Phosphoglucomutase (pgcA) (Staphylococcus epidermidis (strain ATCC 12228 / FDA PCI 1200)).